The following is a 483-amino-acid chain: Pre-glycoprotein polyprotein GP complex (483 aa).

A lipid anchor (N-myristoyl glycine; by host) is attached at Gly2. At 2 to 17 (GQFISFMQEIPIFLQE) the chain is on the extracellular side. Residues 18 to 32 (ALNIALVAVSLICIV) form a helical membrane-spanning segment. A topological domain (cytoplasmic) is located at residue Lys33. A helical transmembrane segment spans residues 34–53 (GLVNLYRCGLFQLMVFLVLA). Extracellular-facing segments span residues 54 to 58 (GRSCS) and 59 to 422 (EETF…TLVD). Residue Cys57 coordinates Zn(2+). 2 N-linked (GlcNAc...) asparagine; by host glycosylation sites follow: Asn83 and Asn95. Intrachain disulfides connect Cys92-Cys224, Cys134-Cys162, Cys205-Cys211, Cys269-Cys282, Cys291-Cys300, and Cys354-Cys375. N-linked (GlcNAc...) asparagine; by host glycosylation is found at Asn164 and Asn176. 4 N-linked (GlcNAc...) asparagine; by host glycosylation sites follow: Asn355, Asn363, Asn380, and Asn385. The helical transmembrane segment at 423–443 (ICFWSTVFFTSTLFLHLIGFP) threads the bilayer. At 444-483 (THEHIRGEGCPLPHRLNSMGGCRCGKYLPLKKPTIWHRRH) the chain is on the cytoplasmic side. 7 residues coordinate Zn(2+): His445, His447, Cys453, His457, Cys465, Cys467, and His483.

This sequence belongs to the arenaviridae GPC protein family. In terms of assembly, homotetramer; disulfide-linked. As to quaternary structure, homotetramer. GP2 homotetramers bind through ionic interactions with GP1 homotetramers to form the GP complex together with the stable signal peptide. The GP-C polyprotein interacts with the host protease MBTPS1/SKI-1 resulting in the polyprotein processing. Post-translationally, specific enzymatic cleavages in vivo yield mature proteins. GP-C polyprotein is cleaved in the endoplasmic reticulum by the host protease MBTPS1. Only cleaved glycoprotein is incorporated into virions. In terms of processing, the SSP remains stably associated with the GP complex following cleavage by signal peptidase and plays crucial roles in the trafficking of GP through the secretory pathway. Myristoylation is necessary for GP2-mediated fusion activity.

The protein localises to the virion membrane. Its subcellular location is the host endoplasmic reticulum membrane. The protein resides in the host Golgi apparatus membrane. It is found in the host cell membrane. Class I viral fusion protein that directs fusion of viral and host endosomal membranes, leading to delivery of the nucleocapsid into the cytoplasm. Membrane fusion is mediated by irreversible conformational changes induced upon acidification in the endosome. Functionally, stable signal peptide (SSP): cleaved and functions as a signal peptide. In addition, it is also retained as the third component of the GP complex. The SSP is required for efficient glycoprotein expression, post-translational maturation cleavage of GP1 and GP2, glycoprotein transport to the cell surface plasma membrane, formation of infectious virus particles, and acid pH-dependent glycoprotein-mediated cell fusion. Its function is as follows. Interacts with the host receptor. In Artibeus (neotropical fruit bats), this protein is Pre-glycoprotein polyprotein GP complex.